We begin with the raw amino-acid sequence, 370 residues long: Dihydroorotate dehydrogenase (370 aa).

Substrate is bound by residues lysine 82, 135–139 (NSFGM), and asparagine 200. Position 82–83 (82–83 (KT)) interacts with FMN. Residue asparagine 200 participates in FMN binding. The active-site Nucleophile is cysteine 203. 2 residues coordinate FMN: lysine 241 and isoleucine 269. 270–271 (NT) lines the substrate pocket. FMN contacts are provided by residues glycine 297, 328 to 329 (GG), and 350 to 351 (AT).

Belongs to the dihydroorotate dehydrogenase family. FMN serves as cofactor.

The enzyme catalyses (S)-dihydroorotate + A = orotate + AH2. The protein operates within pyrimidine metabolism; UMP biosynthesis via de novo pathway. Functionally, catalyzes the conversion of dihydroorotate to orotate. Participates in the pyrimidine biosynthetic pathway. The sequence is that of Dihydroorotate dehydrogenase (pyr4) from Dictyostelium discoideum (Social amoeba).